A 313-amino-acid polypeptide reads, in one-letter code: Arabinooligosaccharides transport system permease protein AraP (313 aa).

The next 6 membrane-spanning stretches (helical) occupy residues 39 to 59 (FVLS…IMSF), 91 to 111 (LEYT…LAIF), 126 to 146 (ALFI…RLIF), 176 to 196 (MFLM…LYFL), 224 to 244 (ITLP…IIGG), and 281 to 301 (MGYG…VSLI). The ABC transmembrane type-1 domain maps to 87 to 302 (LWNTLEYTFW…IVILVVSLIS (216 aa)).

The protein belongs to the binding-protein-dependent transport system permease family. MalFG subfamily. As to quaternary structure, the complex is composed of two ATP-binding proteins (MsmX), two transmembrane proteins (AraP and AraQ) and a solute-binding protein (AraN).

The protein localises to the cell membrane. In terms of biological role, part of the ABC transporter complex AraNPQ involved in the uptake of arabinooligosaccharides. Transports alpha-1,5-arabinooligosaccharides, at least up to four L-arabinosyl units. Responsible for the translocation of the substrate across the membrane. In Bacillus subtilis (strain 168), this protein is Arabinooligosaccharides transport system permease protein AraP.